The following is a 521-amino-acid chain: Bifunctional purine biosynthesis protein PurH (521 aa).

Positions 1-145 (MIKQALISVS…KNHRDVTVVV (145 aa)) constitute an MGS-like domain.

This sequence belongs to the PurH family.

The catalysed reaction is (6R)-10-formyltetrahydrofolate + 5-amino-1-(5-phospho-beta-D-ribosyl)imidazole-4-carboxamide = 5-formamido-1-(5-phospho-D-ribosyl)imidazole-4-carboxamide + (6S)-5,6,7,8-tetrahydrofolate. The enzyme catalyses IMP + H2O = 5-formamido-1-(5-phospho-D-ribosyl)imidazole-4-carboxamide. Its pathway is purine metabolism; IMP biosynthesis via de novo pathway; 5-formamido-1-(5-phospho-D-ribosyl)imidazole-4-carboxamide from 5-amino-1-(5-phospho-D-ribosyl)imidazole-4-carboxamide (10-formyl THF route): step 1/1. It functions in the pathway purine metabolism; IMP biosynthesis via de novo pathway; IMP from 5-formamido-1-(5-phospho-D-ribosyl)imidazole-4-carboxamide: step 1/1. The sequence is that of Bifunctional purine biosynthesis protein PurH from Burkholderia cenocepacia (strain HI2424).